The sequence spans 362 residues: Probable cinnamyl alcohol dehydrogenase 9 (362 aa).

Cys-45 contributes to the Zn(2+) binding site. Position 47 (Ser-47) interacts with NADP(+). Zn(2+) contacts are provided by His-67, Glu-68, Cys-98, Cys-101, Cys-104, Cys-112, and Cys-167. NADP(+)-binding positions include Thr-171, 192–197, 215–220, Thr-255, Gly-279, and 302–304; these read GLGGLG, STSPWK, and SMI.

This sequence belongs to the zinc-containing alcohol dehydrogenase family. As to quaternary structure, homodimer. Zn(2+) is required as a cofactor.

The enzyme catalyses (E)-cinnamyl alcohol + NADP(+) = (E)-cinnamaldehyde + NADPH + H(+). It catalyses the reaction (E)-coniferol + NADP(+) = (E)-coniferaldehyde + NADPH + H(+). It carries out the reaction (E)-sinapyl alcohol + NADP(+) = (E)-sinapaldehyde + NADPH + H(+). The catalysed reaction is (E)-4-coumaroyl alcohol + NADP(+) = (E)-4-coumaraldehyde + NADPH + H(+). The enzyme catalyses (E)-caffeyl alcohol + NADP(+) = (E)-caffeyl aldehyde + NADPH + H(+). The protein operates within aromatic compound metabolism; phenylpropanoid biosynthesis. Involved in lignin biosynthesis. Catalyzes the final step specific for the production of lignin monomers. Catalyzes the NADPH-dependent reduction of coniferaldehyde, 5-hydroxyconiferaldehyde, sinapaldehyde, 4-coumaraldehyde and caffeyl aldehyde to their respective alcohols. This chain is Probable cinnamyl alcohol dehydrogenase 9, found in Oryza sativa subsp. japonica (Rice).